The following is a 317-amino-acid chain: Osteopontin (317 aa).

A signal peptide spans 1-16 (MRLAVVCFCLFGLASC). Phosphoserine occurs at positions 26, 27, 60, 62, and 63. The disordered stretch occupies residues 43 to 297 (WLKPDPSQKQ…LVLDPKSKED (255 aa)). The span at 49–63 (SQKQNLLAPQNSVSS) shows a compositional bias: polar residues. The residue at position 66 (Thr-66) is a Phosphothreonine. Ser-76, Ser-78, Ser-81, Ser-106, Ser-109, Ser-112, Ser-115, and Ser-118 each carry phosphoserine. The segment covering 86–110 (DDDDDDDDDGDHAESEDSVNSDESD) has biased composition (acidic residues). O-linked (GalNAc...) threonine glycans are attached at residues Thr-123, Thr-132, and Thr-137. Positions 144-146 (RGD) match the Cell attachment site motif. 2 positions are modified to phosphothreonine: Thr-170 and Thr-175. Residues 174-187 (LTSRMKSQESDEAI) show a composition bias toward basic and acidic residues. Phosphoserine occurs at positions 176, 180, 200, 204, 209, 213, and 219. The span at 197-216 (SVPSDQDSNGKTSHESSQLD) shows a compositional bias: polar residues. O-linked (Xyl...) (chondroitin sulfate) serine glycosylation occurs at Ser-219. At Thr-222 the chain carries Phosphothreonine. Composition is skewed to basic and acidic residues over residues 223-240 (HSLE…HEST) and 248-263 (SAEK…RSDA). Ser-224, Ser-228, Ser-257, Ser-261, Ser-266, Ser-270, Ser-273, Ser-278, Ser-283, Ser-294, Ser-306, Ser-311, Ser-313, and Ser-314 each carry phosphoserine. Basic and acidic residues predominate over residues 273-297 (SLEHQSHEFHSHEDKLVLDPKSKED). Residue Ser-311 is glycosylated (O-linked (Xyl...) (chondroitin sulfate) serine).

The protein belongs to the osteopontin family. Interacts (via N-terminus) with integrin ITGA9:ITGB1. Extensively phosphorylated by FAM20C in the extracellular medium at multiple sites within the S-x-E/pS motif. The phosphorylated form inhibits hydroxyapatite crystallization. Dephosphorylation via a mechanism involving ALPL/TNAP promotes hydroxyapatite crystallization. Post-translationally, O-glycosylated. In terms of processing, forms covalent cross-links mediated by transglutaminase TGM2, between a glutamine and the epsilon-amino group of a lysine residue, forming homopolymers and heteropolymers, increasing its collagen binding properties.

It is found in the secreted. In terms of biological role, major non-collagenous bone protein that binds tightly to hydroxyapatite. Appears to form an integral part of the mineralized matrix. Probably important to cell-matrix interaction. Acts as a cytokine involved in enhancing production of interferon-gamma and interleukin-12 and reducing production of interleukin-10 and is essential in the pathway that leads to type I immunity. In Rattus norvegicus (Rat), this protein is Osteopontin (Spp1).